Reading from the N-terminus, the 962-residue chain is Leucine--tRNA ligase (962 aa).

A 'HIGH' region motif is present at residues 41–51 (PYLNGNLHAGH). Residues 631 to 635 (KMSKS) carry the 'KMSKS' region motif. Residue Lys-634 participates in ATP binding.

This sequence belongs to the class-I aminoacyl-tRNA synthetase family.

It localises to the cytoplasm. It catalyses the reaction tRNA(Leu) + L-leucine + ATP = L-leucyl-tRNA(Leu) + AMP + diphosphate. The sequence is that of Leucine--tRNA ligase from Methanococcoides burtonii (strain DSM 6242 / NBRC 107633 / OCM 468 / ACE-M).